Reading from the N-terminus, the 155-residue chain is MSRRKNAEKRIVNPDPVYRNRLVNMLVNRILKNGKKSLAYRILYKAMKNIKTKTQKNPLFILRQAIRKATPKVAVKARRVGGSTYQVPVEIQSSQGKALAIRWLLTSAKKRAGRNFISKLSNEIIDTARDTGNTIRKKEETHRMAESNRAFAHFR.

The protein belongs to the universal ribosomal protein uS7 family. In terms of assembly, part of the 30S ribosomal subunit.

The protein resides in the plastid. The protein localises to the chloroplast. One of the primary rRNA binding proteins, it binds directly to 16S rRNA where it nucleates assembly of the head domain of the 30S subunit. In Chaetosphaeridium globosum (Charophycean green alga), this protein is Small ribosomal subunit protein uS7c (rps7).